We begin with the raw amino-acid sequence, 128 residues long: Profilin (128 aa).

Belongs to the profilin family.

More likely to influence phosphoinositide metabolism than actin assembly. The sequence is that of Profilin from Homo sapiens (Human).